A 337-amino-acid chain; its full sequence is Ferredoxin--NADP reductase (337 aa).

Residues aspartate 35, glutamine 43, tyrosine 48, valine 88, phenylalanine 123, aspartate 289, and threonine 330 each contribute to the FAD site.

It belongs to the ferredoxin--NADP reductase type 2 family. Homodimer. The cofactor is FAD.

It catalyses the reaction 2 reduced [2Fe-2S]-[ferredoxin] + NADP(+) + H(+) = 2 oxidized [2Fe-2S]-[ferredoxin] + NADPH. The protein is Ferredoxin--NADP reductase of Paramagnetospirillum magneticum (strain ATCC 700264 / AMB-1) (Magnetospirillum magneticum).